A 617-amino-acid polypeptide reads, in one-letter code: MPKVNINRDILYKALGFYIKTYTQEQFEDLCFAFGVELDEVTSEREMKKNETGVEDLTVSDDVIYKIDVSANRYDLLCLEGIARALNVYNHKASIPKYQIVPPKNSHEKLYISKEVESVRPVIVAGILRDITFTQESYDSFIDLQEKLHANICKKRSLVSIGTHDLDTLSGPFYYKALAPKDIKFVPLSQTKEYNAEELFKFYDESSSHLKKFLPIIKDSPVYPVIYDSKNVVCSLPPIINGEHSKIKLSTKNVFIEVTANDRTKANIVLNTMLTMFSEYCKQPFTMEQVEVIDADGKSTGLYPQIQEKQINAQVDYINKSAGINITPNDMVTLLKRMSLQSKLSDDEKSIIVDVPVTRSDIMHACDIMEDVAIGYGYDNLKKEIPNCNTIGRVQPINKLSELLANEIALAGFTEIMTFVLCQNRDNFTALNKADDGSSVKISNAVSEEFTEVRTNLVSTLLKSVSANKAAPLPLKMFEISDVSIKGSLGNKDLSDPNSNNSDVGAYNKRMLGAIYCNQSAKIEVIHGLLDRIMLVLDIKLDATRSSNKGYYLELSNDKLFLPGTGINVIVNGKRVGHMGIVHPLVLKNYSCSFPCTILELELTIDTMAHNVLLREN.

Positions 306 to 383 (IQEKQINAQV…IGYGYDNLKK (78 aa)) constitute a B5 domain. Asp-361, Asp-367, Glu-370, and Asp-371 together coordinate Mg(2+).

Belongs to the phenylalanyl-tRNA synthetase beta subunit family. Type 2 subfamily. In terms of assembly, tetramer of two alpha and two beta subunits. Requires Mg(2+) as cofactor.

The protein localises to the cytoplasm. It carries out the reaction tRNA(Phe) + L-phenylalanine + ATP = L-phenylalanyl-tRNA(Phe) + AMP + diphosphate + H(+). The protein is Phenylalanine--tRNA ligase beta subunit (phesB) of Dictyostelium discoideum (Social amoeba).